Reading from the N-terminus, the 101-residue chain is MIPGEILTDDGEHELNAGRATRSLVVANTGDRPVQVGSHYHFFEVNDALSFDRAAARGFRLNIAAGTAVRFEPGQTRTVELVELAGDRAVYGFQGKVMGPL.

The protein belongs to the urease beta subunit family. Heterotrimer of UreA (gamma), UreB (beta) and UreC (alpha) subunits. Three heterotrimers associate to form the active enzyme.

It localises to the cytoplasm. It carries out the reaction urea + 2 H2O + H(+) = hydrogencarbonate + 2 NH4(+). The protein operates within nitrogen metabolism; urea degradation; CO(2) and NH(3) from urea (urease route): step 1/1. The sequence is that of Urease subunit beta from Burkholderia vietnamiensis (strain G4 / LMG 22486) (Burkholderia cepacia (strain R1808)).